Consider the following 233-residue polypeptide: 3,4-dihydroxy-2-butanone 4-phosphate synthase (233 aa).

A Mg(2+)-binding site is contributed by glutamate 37. Residue glutamate 37 participates in Mn(2+) binding. Aspartate 41 contributes to the D-ribulose 5-phosphate binding site. An S-glutathionyl cysteine modification is found at cysteine 66. D-ribulose 5-phosphate is bound by residues threonine 92 and 150–154 (RRGHT). Histidine 153 is a Mg(2+) binding site. Histidine 153 serves as a coordination point for Mn(2+).

As to quaternary structure, homodimer. It depends on Mg(2+) as a cofactor. Mn(2+) is required as a cofactor. In terms of processing, S-glutathionylation is reversible and dependent on a glutaredoxin.

The enzyme catalyses D-ribulose 5-phosphate = (2S)-2-hydroxy-3-oxobutyl phosphate + formate + H(+). Its pathway is cofactor biosynthesis; riboflavin biosynthesis; 2-hydroxy-3-oxobutyl phosphate from D-ribulose 5-phosphate: step 1/1. Functionally, catalyzes the conversion of D-ribulose 5-phosphate to formate and 3,4-dihydroxy-2-butanone 4-phosphate. The chain is 3,4-dihydroxy-2-butanone 4-phosphate synthase (RIB3) from Pyricularia oryzae (strain 70-15 / ATCC MYA-4617 / FGSC 8958) (Rice blast fungus).